A 117-amino-acid chain; its full sequence is UPF0127 protein PYRAB11210 (117 aa).

Belongs to the UPF0127 family.

This is UPF0127 protein PYRAB11210 from Pyrococcus abyssi (strain GE5 / Orsay).